A 31-amino-acid chain; its full sequence is U6-ctenitoxin-Co1a (31 aa).

Cystine bridges form between Cys-2/Cys-18 and Cys-9/Cys-23.

As to expression, expressed by the venom gland.

The protein localises to the secreted. Antagonist of L-type calcium channels (Cav1/CACNA1). The sequence is that of U6-ctenitoxin-Co1a from Ctenus ornatus (Brazilian spider).